We begin with the raw amino-acid sequence, 320 residues long: Protein U25 (320 aa).

It belongs to the herpesviridae US22 family.

The chain is Protein U25 (U25) from Human herpesvirus 7 (strain JI) (HHV-7).